We begin with the raw amino-acid sequence, 151 residues long: Protein Smg homolog (151 aa).

It belongs to the Smg family.

This Laribacter hongkongensis (strain HLHK9) protein is Protein Smg homolog.